The following is a 321-amino-acid chain: MNTVGTPLLWGGFAVVVAIMLAIDLLLQGRRGAHAMTMKQAAAWSLVWVTLSLLFNAAFWWYLVQTEGRAVADPQALAFLTGYLIEKSLAVDNVFVWLMLFSYFSVPAALQRRVLVYGVLGAIVLRTIMIFTGSWLISQFDWILYIFGAFLLFTGVKMALAHEDESGIGDKPLVRWLRGHLRMTDTIDNEHFFVRKNGLLYATPLMLVLILVELSDVIFAVDSIPAIFAVTTDPFIVLTSNLFAILGLRAMYFLLAGVAERFSMLKYGLAVILVFIGIKMLIVDFYHIPIAVSLGVVFGILVMTFIINAWVNYRHDKQRVG.

The Periplasmic portion of the chain corresponds to 1-6 (MNTVGT). The chain crosses the membrane as a helical span at residues 7–27 (PLLWGGFAVVVAIMLAIDLLL). At 28-43 (QGRRGAHAMTMKQAAA) the chain is on the cytoplasmic side. A helical membrane pass occupies residues 44–64 (WSLVWVTLSLLFNAAFWWYLV). Topologically, residues 65 to 89 (QTEGRAVADPQALAFLTGYLIEKSL) are periplasmic. The chain crosses the membrane as a helical span at residues 90–110 (AVDNVFVWLMLFSYFSVPAAL). Topologically, residues 111–113 (QRR) are cytoplasmic. Residues 114 to 134 (VLVYGVLGAIVLRTIMIFTGS) traverse the membrane as a helical segment. Tryptophan 135 is a topological domain (periplasmic). A helical membrane pass occupies residues 136-156 (LISQFDWILYIFGAFLLFTGV). At 157 to 198 (KMALAHEDESGIGDKPLVRWLRGHLRMTDTIDNEHFFVRKNG) the chain is on the cytoplasmic side. The chain crosses the membrane as a helical span at residues 199-219 (LLYATPLMLVLILVELSDVIF). The Periplasmic portion of the chain corresponds to 220 to 225 (AVDSIP). Residues 226–246 (AIFAVTTDPFIVLTSNLFAIL) traverse the membrane as a helical segment. Over 247–261 (GLRAMYFLLAGVAER) the chain is Cytoplasmic. Residues 262 to 282 (FSMLKYGLAVILVFIGIKMLI) traverse the membrane as a helical segment. Topologically, residues 283–286 (VDFY) are periplasmic. Residues 287–307 (HIPIAVSLGVVFGILVMTFII) traverse the membrane as a helical segment. The Cytoplasmic segment spans residues 308 to 321 (NAWVNYRHDKQRVG).

The protein belongs to the TerC family.

It is found in the cell inner membrane. Has been proposed to be a redox modulator. The protein is Putative membrane-bound redox modulator Alx (alx) of Escherichia coli O157:H7.